We begin with the raw amino-acid sequence, 407 residues long: Cysteine desulfurase (407 aa).

Lys-226 is subject to N6-(pyridoxal phosphate)lysine. The active-site Cysteine persulfide intermediate is Cys-364.

Belongs to the class-V pyridoxal-phosphate-dependent aminotransferase family. Csd subfamily. In terms of assembly, homodimer. Interacts with SufE and the SufBCD complex composed of SufB, SufC and SufD. The interaction with SufE is required to mediate the direct transfer of the sulfur atom from the S-sulfanylcysteine. It depends on pyridoxal 5'-phosphate as a cofactor.

The protein resides in the cytoplasm. The enzyme catalyses (sulfur carrier)-H + L-cysteine = (sulfur carrier)-SH + L-alanine. It carries out the reaction L-selenocysteine + AH2 = hydrogenselenide + L-alanine + A + H(+). It participates in cofactor biosynthesis; iron-sulfur cluster biosynthesis. Cysteine desulfurases mobilize the sulfur from L-cysteine to yield L-alanine, an essential step in sulfur metabolism for biosynthesis of a variety of sulfur-containing biomolecules. Component of the suf operon, which is activated and required under specific conditions such as oxidative stress and iron limitation. Acts as a potent selenocysteine lyase in vitro, that mobilizes selenium from L-selenocysteine. Selenocysteine lyase activity is however unsure in vivo. The chain is Cysteine desulfurase from Pectobacterium atrosepticum (strain SCRI 1043 / ATCC BAA-672) (Erwinia carotovora subsp. atroseptica).